The chain runs to 130 residues: Ribosome-binding factor A (130 aa).

Residues Arg-111–Arg-130 are disordered.

It belongs to the RbfA family. Monomer. Binds 30S ribosomal subunits, but not 50S ribosomal subunits or 70S ribosomes.

It is found in the cytoplasm. One of several proteins that assist in the late maturation steps of the functional core of the 30S ribosomal subunit. Associates with free 30S ribosomal subunits (but not with 30S subunits that are part of 70S ribosomes or polysomes). Required for efficient processing of 16S rRNA. May interact with the 5'-terminal helix region of 16S rRNA. The sequence is that of Ribosome-binding factor A from Xanthomonas oryzae pv. oryzae (strain MAFF 311018).